The primary structure comprises 212 residues: Phosphatidylserine decarboxylase proenzyme (212 aa).

Ser182 functions as the Schiff-base intermediate with substrate; via pyruvic acid in the catalytic mechanism. Ser182 carries the post-translational modification Pyruvic acid (Ser); by autocatalysis.

It belongs to the phosphatidylserine decarboxylase family. PSD-A subfamily. Heterodimer of a large membrane-associated beta subunit and a small pyruvoyl-containing alpha subunit. Requires pyruvate as cofactor. Is synthesized initially as an inactive proenzyme. Formation of the active enzyme involves a self-maturation process in which the active site pyruvoyl group is generated from an internal serine residue via an autocatalytic post-translational modification. Two non-identical subunits are generated from the proenzyme in this reaction, and the pyruvate is formed at the N-terminus of the alpha chain, which is derived from the carboxyl end of the proenzyme. The post-translation cleavage follows an unusual pathway, termed non-hydrolytic serinolysis, in which the side chain hydroxyl group of the serine supplies its oxygen atom to form the C-terminus of the beta chain, while the remainder of the serine residue undergoes an oxidative deamination to produce ammonia and the pyruvoyl prosthetic group on the alpha chain.

The protein resides in the cell membrane. The catalysed reaction is a 1,2-diacyl-sn-glycero-3-phospho-L-serine + H(+) = a 1,2-diacyl-sn-glycero-3-phosphoethanolamine + CO2. It participates in phospholipid metabolism; phosphatidylethanolamine biosynthesis; phosphatidylethanolamine from CDP-diacylglycerol: step 2/2. Its function is as follows. Catalyzes the formation of phosphatidylethanolamine (PtdEtn) from phosphatidylserine (PtdSer). The polypeptide is Phosphatidylserine decarboxylase proenzyme (Chlorobium limicola (strain DSM 245 / NBRC 103803 / 6330)).